Reading from the N-terminus, the 74-residue chain is MDLSVKSEENVEYMVEAIKEKLRMVNAGAMRAASFNEEMYEDLRDIYDHVMKRETFSISEMQAITEELGTLIKK.

This sequence belongs to the UPF0435 family.

The protein is UPF0435 protein BCB4264_A0471 of Bacillus cereus (strain B4264).